The following is a 350-amino-acid chain: Selenide, water dikinase (350 aa).

Selenocysteine 15 is a catalytic residue. Position 15 (selenocysteine 15) is a non-standard amino acid, selenocysteine. ATP contacts are provided by residues lysine 18 and 47–49 (HNE). Residue aspartate 50 participates in Mg(2+) binding. ATP contacts are provided by residues aspartate 67, aspartate 90, and 138–140 (GHS). Residue aspartate 90 participates in Mg(2+) binding. Residue aspartate 227 coordinates Mg(2+).

This sequence belongs to the selenophosphate synthase 1 family. Class I subfamily. As to quaternary structure, homodimer. Mg(2+) serves as cofactor.

The enzyme catalyses hydrogenselenide + ATP + H2O = selenophosphate + AMP + phosphate + 2 H(+). In terms of biological role, synthesizes selenophosphate from selenide and ATP. In Nitratidesulfovibrio vulgaris (strain DSM 19637 / Miyazaki F) (Desulfovibrio vulgaris), this protein is Selenide, water dikinase.